Reading from the N-terminus, the 292-residue chain is Lyso-ornithine lipid O-acyltransferase (292 aa).

The chain crosses the membrane as a helical span at residues 11–31; it reads GMLLVMVSLVLMPVQILCLWL. The interval 258-292 is disordered; that stretch reads RLRGRSRSAAKGEPAPACSAAPDIPSDAQRSRLAP.

Belongs to the 1-acyl-sn-glycerol-3-phosphate acyltransferase family. OlsA subfamily.

The protein localises to the membrane. It carries out the reaction a lyso-ornithine lipid + a fatty acyl-[ACP] = an N(2)-[(3R)-3-(acyloxy)acyl]-L-ornithine lipid + holo-[ACP]. It functions in the pathway lipid metabolism. In terms of biological role, catalyzes the second step in the formation of ornithine lipids, which are phosphorus-free membrane lipids. Uses acyl-acyl carrier protein (acyl-AcpP) as an acyl donor and converts lyso-ornithine lipid (LOL) into ornithine lipid (OL). The protein is Lyso-ornithine lipid O-acyltransferase of Rhizobium meliloti (strain 1021) (Ensifer meliloti).